A 546-amino-acid chain; its full sequence is Phosphoglucomutase (546 aa).

Residue Ser135 is the Phosphoserine intermediate of the active site. Ser135, Asp288, Asp290, and Asp292 together coordinate Mg(2+).

The protein belongs to the phosphohexose mutase family. Mg(2+) is required as a cofactor.

It catalyses the reaction alpha-D-glucose 1-phosphate = alpha-D-glucose 6-phosphate. The protein operates within glycolipid metabolism; diglucosyl-diacylglycerol biosynthesis. In terms of biological role, catalyzes the interconversion between glucose-6-phosphate and alpha-glucose-1-phosphate. This is the first step in the biosynthesis of diglucosyl-diacylglycerol (Glc2-DAG), i.e. a glycolipid found in the membrane, which is also used as a membrane anchor for lipoteichoic acid (LTA). In Staphylococcus epidermidis (strain ATCC 12228 / FDA PCI 1200), this protein is Phosphoglucomutase (pgcA).